The primary structure comprises 306 residues: Nucleotide-binding protein amb4396 (306 aa).

Over residues 1–14 the composition is skewed to polar residues; the sequence is MSDLHSSPTDQTSA. The disordered stretch occupies residues 1–20; sequence MSDLHSSPTDQTSAPAHAGG. Residue 29 to 36 participates in ATP binding; that stretch reads GMSGAGKT. 77–80 serves as a coordination point for GTP; the sequence is DIRT.

This sequence belongs to the RapZ-like family.

Functionally, displays ATPase and GTPase activities. The chain is Nucleotide-binding protein amb4396 from Paramagnetospirillum magneticum (strain ATCC 700264 / AMB-1) (Magnetospirillum magneticum).